We begin with the raw amino-acid sequence, 460 residues long: Notoamide biosynthesis cluster transcriptional coactivator notR (460 aa).

Residues L74–T145 form the HTH iclR-type domain. Positions I107 to R126 form a DNA-binding region, H-T-H motif. The tract at residues T300–V320 is disordered.

It localises to the nucleus. Transcription factor that probably regulates the expression of the gene cluster that mediates the biosynthesis of notoamide, a fungal indole alkaloid that belongs to a family of natural products containing a characteristic bicyclo[2.2.2]diazaoctane core. The chain is Notoamide biosynthesis cluster transcriptional coactivator notR from Aspergillus sp. (strain MF297-2).